Consider the following 155-residue polypeptide: MMHPVASSNPAFCGPGKPSCLNEDAMRAADQFDIYSSQQSKYSHTVNHKPMVCQRQDPLNETHLQTTSGRSIEIKDELKKKKNLNRSGKRGRPSGTTKSAGYRTSTGRPLGTTKAAGFKTSPGRPLGTTKAAGYKVSPGRPPGKKQQAFRCSSDA.

Positions 1-10 (MMHPVASSNP) are enriched in polar residues. The interval 1–20 (MMHPVASSNPAFCGPGKPSC) is disordered. A Phosphoserine modification is found at Ser-37. Residues 40–155 (SKYSHTVNHK…QQAFRCSSDA (116 aa)) are disordered. Residues 57-70 (DPLNETHLQTTSGR) are compositionally biased toward polar residues. Residue Lys-75 forms a Glycyl lysine isopeptide (Lys-Gly) (interchain with G-Cter in SUMO2) linkage. A compositionally biased stretch (basic residues) spans 80–92 (KKKNLNRSGKRGR). The segment covering 94-107 (SGTTKSAGYRTSTG) has biased composition (polar residues). Ser-121 is modified (phosphoserine).

This sequence belongs to the UPF0461 family.

The protein is UPF0461 protein C5orf24 homolog of Pongo abelii (Sumatran orangutan).